The primary structure comprises 612 residues: Proton pump-interactor 1 (612 aa).

Positions 1–58 are disordered; that stretch reads MGVEVVNSGGFEVAPAPFEGKPEKNGKLDQGKGDDAPINFGSVGELPKNAEENNNKVV. Over residues 20-35 the composition is skewed to basic and acidic residues; sequence GKPEKNGKLDQGKGDD. 2 coiled-coil regions span residues 90 to 113 and 251 to 314; these read PKIK…RTGV and LDGV…NSEY. 4 stretches are compositionally biased toward basic and acidic residues: residues 374-387, 434-446, 459-498, and 505-519; these read LSRD…DEKP, EKAK…KNVA, PQKE…EKAA, and AQKE…EQEK. Residues 374–572 are disordered; the sequence is LSRDGRMRNP…PIRNRTRGRG (199 aa). Positions 466–526 form a coiled coil; the sequence is VDAATAKEMR…QEKKAKKKTG (61 aa). A compositionally biased stretch (acidic residues) spans 531–545; that stretch reads TETEEVPEASEEEIE. At Ser-540 the chain carries Phosphoserine. The segment covering 549–564 has biased composition (basic and acidic residues); sequence QEEKPQKEKVFKEKPI. The chain crosses the membrane as a helical span at residues 591–611; that stretch reads VYAAPAALVVLLLLVLGYYYV.

This sequence belongs to the plant Proton pump-interactor protein family. As to quaternary structure, interacts with AHA1 via N-terminal region. In terms of tissue distribution, strongly expressed in root and shoot vascular systems, particularly in meristematic and sink tissues. Also present in pollen, stigmas and siliques, but not in developing embryos.

It is found in the cell membrane. Its subcellular location is the endoplasmic reticulum membrane. In terms of biological role, promotes AHA1 plasma membrane ATPase activity by binding to a site different from the 14-3-3 binding site. This Arabidopsis thaliana (Mouse-ear cress) protein is Proton pump-interactor 1 (PPI1).